The following is a 316-amino-acid chain: 2,3-dihydroxyphenylpropionate/2,3-dihydroxicinnamic acid 1,2-dioxygenase (316 aa).

His118 functions as the Proton donor in the catalytic mechanism. The active-site Proton acceptor is His182.

This sequence belongs to the LigB/MhpB extradiol dioxygenase family. Homotetramer. Requires Fe(2+) as cofactor.

It catalyses the reaction 3-(2,3-dihydroxyphenyl)propanoate + O2 = (2Z,4E)-2-hydroxy-6-oxonona-2,4-dienedioate + H(+). It carries out the reaction (2E)-3-(2,3-dihydroxyphenyl)prop-2-enoate + O2 = (2Z,4E,7E)-2-hydroxy-6-oxonona-2,4,7-trienedioate + H(+). The protein operates within aromatic compound metabolism; 3-phenylpropanoate degradation. Functionally, catalyzes the non-heme iron(II)-dependent oxidative cleavage of 2,3-dihydroxyphenylpropionic acid and 2,3-dihydroxicinnamic acid into 2-hydroxy-6-ketononadienedioate and 2-hydroxy-6-ketononatrienedioate, respectively. The polypeptide is 2,3-dihydroxyphenylpropionate/2,3-dihydroxicinnamic acid 1,2-dioxygenase (Mycolicibacterium vanbaalenii (strain DSM 7251 / JCM 13017 / BCRC 16820 / KCTC 9966 / NRRL B-24157 / PYR-1) (Mycobacterium vanbaalenii)).